Consider the following 739-residue polypeptide: Adenosylcobalamin-dependent ribonucleoside-triphosphate reductase (739 aa).

A disulfide bridge links C119 with C419. The effector region-1 stretch occupies residues 147–158 (SMPFSFLFDELM). The segment at 168-313 (ARSNISQIPR…ICNLIGKAVV (146 aa)) is effector region-2. Residues C408 and E410 contribute to the active site. The segment at 565-626 (FHYGAYLIQR…NPNFASAGTV (62 aa)) is adenosylcobalamin-binding-1. The interval 685-724 (LQQAPKEPIDKETYEKRSQEITGNVEEVFSQLNSDVKDLE) is adenosylcobalamin-binding-2.

Belongs to the class II ribonucleoside-triphosphate reductase family. In terms of assembly, monomer. The cofactor is adenosylcob(III)alamin.

It catalyses the reaction a 2'-deoxyribonucleoside 5'-triphosphate + [thioredoxin]-disulfide + H2O = a ribonucleoside 5'-triphosphate + [thioredoxin]-dithiol. Its activity is regulated as follows. Allosterically regulated by ATP and dNTP. This chain is Adenosylcobalamin-dependent ribonucleoside-triphosphate reductase (rtpR), found in Lactobacillus leichmannii.